The sequence spans 124 residues: Large ribosomal subunit protein bL19 (124 aa).

The protein belongs to the bacterial ribosomal protein bL19 family.

Functionally, this protein is located at the 30S-50S ribosomal subunit interface and may play a role in the structure and function of the aminoacyl-tRNA binding site. The protein is Large ribosomal subunit protein bL19 of Orientia tsutsugamushi (strain Ikeda) (Rickettsia tsutsugamushi).